The primary structure comprises 142 residues: Large ribosomal subunit protein uL13 (142 aa).

This sequence belongs to the universal ribosomal protein uL13 family. Part of the 50S ribosomal subunit.

This protein is one of the early assembly proteins of the 50S ribosomal subunit, although it is not seen to bind rRNA by itself. It is important during the early stages of 50S assembly. This Geobacter sp. (strain M21) protein is Large ribosomal subunit protein uL13.